A 217-amino-acid chain; its full sequence is Protein-L-isoaspartate O-methyltransferase 2 (217 aa).

S64 is an active-site residue.

The protein belongs to the methyltransferase superfamily. L-isoaspartyl/D-aspartyl protein methyltransferase family.

The protein localises to the cytoplasm. The catalysed reaction is [protein]-L-isoaspartate + S-adenosyl-L-methionine = [protein]-L-isoaspartate alpha-methyl ester + S-adenosyl-L-homocysteine. Functionally, catalyzes the methyl esterification of L-isoaspartyl residues in peptides and proteins that result from spontaneous decomposition of normal L-aspartyl and L-asparaginyl residues. It plays a role in the repair and/or degradation of damaged proteins. In Rhodopseudomonas palustris (strain HaA2), this protein is Protein-L-isoaspartate O-methyltransferase 2.